Consider the following 235-residue polypeptide: 5'-methylthioadenosine/S-adenosylhomocysteine nucleosidase (235 aa).

E12 functions as the Proton acceptor in the catalytic mechanism. Substrate is bound by residues G78, I152, and 173–174 (ME). The active-site Proton donor is D197.

The protein belongs to the PNP/UDP phosphorylase family. MtnN subfamily. In terms of assembly, homodimer.

The catalysed reaction is S-adenosyl-L-homocysteine + H2O = S-(5-deoxy-D-ribos-5-yl)-L-homocysteine + adenine. It carries out the reaction S-methyl-5'-thioadenosine + H2O = 5-(methylsulfanyl)-D-ribose + adenine. The enzyme catalyses 5'-deoxyadenosine + H2O = 5-deoxy-D-ribose + adenine. It functions in the pathway amino-acid biosynthesis; L-methionine biosynthesis via salvage pathway; S-methyl-5-thio-alpha-D-ribose 1-phosphate from S-methyl-5'-thioadenosine (hydrolase route): step 1/2. Catalyzes the irreversible cleavage of the glycosidic bond in both 5'-methylthioadenosine (MTA) and S-adenosylhomocysteine (SAH/AdoHcy) to adenine and the corresponding thioribose, 5'-methylthioribose and S-ribosylhomocysteine, respectively. Also cleaves 5'-deoxyadenosine, a toxic by-product of radical S-adenosylmethionine (SAM) enzymes, into 5-deoxyribose and adenine. Thus, is required for in vivo function of the radical SAM enzymes biotin synthase and lipoic acid synthase, that are inhibited by 5'-deoxyadenosine accumulation. The sequence is that of 5'-methylthioadenosine/S-adenosylhomocysteine nucleosidase from Proteus mirabilis (strain HI4320).